The chain runs to 25 residues: Nicotinic acetylcholine receptor-binding protein Mnn-4 (25 aa).

A disulfide bridge connects residues Cys3 and Cys20.

The protein belongs to the three-finger toxin family. Short-chain subfamily. Expressed by the venom gland.

It is found in the secreted. Functionally, binds and may inhibit nicotinic acetylcholine receptors (nAChR). In Micrurus nigrocinctus (Central American coral snake), this protein is Nicotinic acetylcholine receptor-binding protein Mnn-4.